Consider the following 293-residue polypeptide: Putative F-box/kelch-repeat protein At4g34170 (293 aa).

In terms of domain architecture, F-box spans V9–R55. 3 Kelch repeats span residues N94–G140, K141–R187, and S226–Y272.

The sequence is that of Putative F-box/kelch-repeat protein At4g34170 from Arabidopsis thaliana (Mouse-ear cress).